The sequence spans 96 residues: UPF0251 protein Ssed_3913 (96 aa).

The protein belongs to the UPF0251 family.

This chain is UPF0251 protein Ssed_3913, found in Shewanella sediminis (strain HAW-EB3).